The primary structure comprises 131 residues: Putative superoxide reductase (131 aa).

Residues E15, H17, H45, H51, C115, and H118 each coordinate Fe cation.

This sequence belongs to the desulfoferrodoxin family. The cofactor is Fe cation.

The catalysed reaction is reduced [rubredoxin] + superoxide + 2 H(+) = oxidized [rubredoxin] + H2O2. In terms of biological role, uses electrons from reduced NADP, by way of rubredoxin and an oxidoreductase, to catalyze the reduction of superoxide to hydrogen peroxide. The polypeptide is Putative superoxide reductase (Thermotoga maritima (strain ATCC 43589 / DSM 3109 / JCM 10099 / NBRC 100826 / MSB8)).